The following is a 239-amino-acid chain: Probable transcriptional regulatory protein BCG9842_B4761 (239 aa).

It belongs to the TACO1 family. YeeN subfamily.

The protein localises to the cytoplasm. The chain is Probable transcriptional regulatory protein BCG9842_B4761 from Bacillus cereus (strain G9842).